The chain runs to 303 residues: Paired immunoglobulin-like type 2 receptor alpha (303 aa).

The first 19 residues, 1-19, serve as a signal peptide directing secretion; the sequence is MGRPLLLPLLPLLLPPAFL. Topologically, residues 20–197 are extracellular; that stretch reads QPSGSTGSGP…DSWHISLETA (178 aa). The Ig-like V-type domain occupies 32 to 150; sequence LYGVTQPKHL…SIEGTKLSIT (119 aa). N-linked (GlcNAc...) asparagine glycosylation occurs at Asn100. Residues 198–218 traverse the membrane as a helical segment; it reads VGVAVAVTVLGIMILGLICLL. Over 219 to 303 the chain is Cytoplasmic; sequence RWRRRKGQQR…NETLYSVLKA (85 aa). The segment at 226-296 is disordered; sequence QQRTKATTPA…RPLKSPQNET (71 aa). Short sequence motifs (ITIM motif) lie at residues 267–272 and 296–301; these read IVYASL and TLYSVL.

Monomer. Interacts with PTPN6/SHP-1 and PTPN11/SHP-2 upon tyrosine phosphorylation. As to quaternary structure, (Microbial infection) Interacts with herpes simplex virus 1 glycoprotein B. In terms of processing, according to PubMed:10660620, N- and O-glycosylated. According to PubMed:10903717, only N-glycosylated. Phosphorylated on tyrosine residues. In terms of tissue distribution, predominantly detected in hemopoietic tissues and is expressed by monocytes, macrophages, and granulocytes, but not by lymphocytes. Also strongly expressed by dendritic cells (DC); preferentially by CD14+/CD1a- DC derived from CD34+ progenitors. Also expressed by CD11c+ blood and tonsil DC, but not by CD11c- DC precursors.

It localises to the cell membrane. Its subcellular location is the secreted. Paired receptors consist of highly related activating and inhibitory receptors and are widely involved in the regulation of the immune system. PILRA is thought to act as a cellular signaling inhibitory receptor by recruiting cytoplasmic phosphatases like PTPN6/SHP-1 and PTPN11/SHP-2 via their SH2 domains that block signal transduction through dephosphorylation of signaling molecules. Receptor for PIANP. In terms of biological role, (Microbial infection) Acts as an entry co-receptor for herpes simplex virus 1. This is Paired immunoglobulin-like type 2 receptor alpha (PILRA) from Homo sapiens (Human).